A 442-amino-acid polypeptide reads, in one-letter code: Trigger factor (442 aa).

Positions 176–259 constitute a PPIase FKBP-type domain; sequence GDFISLSLYV…VNAVIEISSP (84 aa).

It belongs to the FKBP-type PPIase family. Tig subfamily.

It localises to the cytoplasm. It carries out the reaction [protein]-peptidylproline (omega=180) = [protein]-peptidylproline (omega=0). Functionally, involved in protein export. Acts as a chaperone by maintaining the newly synthesized protein in an open conformation. Functions as a peptidyl-prolyl cis-trans isomerase. The sequence is that of Trigger factor from Chlamydia trachomatis serovar L2 (strain ATCC VR-902B / DSM 19102 / 434/Bu).